The sequence spans 79 residues: Sulfur carrier protein TusA (79 aa).

C17 (cysteine persulfide intermediate) is an active-site residue.

This sequence belongs to the sulfur carrier protein TusA family.

It localises to the cytoplasm. In terms of biological role, sulfur carrier protein which probably makes part of a sulfur-relay system. This Haemophilus influenzae (strain PittEE) protein is Sulfur carrier protein TusA.